A 558-amino-acid chain; its full sequence is Ribonuclease J (558 aa).

Residues H81, H83, D85, H86, H148, and D170 each contribute to the Zn(2+) site. Substrate is bound at residue 371 to 375; it reads HVSGH. Residue H397 participates in Zn(2+) binding.

Belongs to the metallo-beta-lactamase superfamily. RNA-metabolizing metallo-beta-lactamase-like family. Bacterial RNase J subfamily. Homodimer. Zn(2+) is required as a cofactor.

It is found in the cytoplasm. Functionally, an RNase that has endonuclease and 5'-3' exonuclease activity. The 5'-exonuclease activity acts on 5'-monophosphate but not 5'-triphosphate ends. Endonuclease activity can cleave within 4 nucleotides of the 5'-end of a triphosphorylated RNA. Plays the major role in pre-23S rRNA maturation, and a minor role in processing of pre-5S and pre-16S rRNA. The protein is Ribonuclease J of Mycolicibacterium smegmatis (strain ATCC 700084 / mc(2)155) (Mycobacterium smegmatis).